The chain runs to 667 residues: UvrABC system protein B (667 aa).

Positions 28-185 (NNFKQGLKEQ…NKLIELKYQR (158 aa)) constitute a Helicase ATP-binding domain. 41-48 (GATGTGKT) contacts ATP. The Beta-hairpin signature appears at 94–117 (YYDYYQPEAYVASSDTYIEKDSKI). The region spanning 432–594 (QMDDLYFEIK…VTPTALNKTI (163 aa)) is the Helicase C-terminal domain. The 36-residue stretch at 629-664 (NKEIKRLQKTMKEAAKALDFEKAATLRDLILDLEKK) folds into the UVR domain.

This sequence belongs to the UvrB family. As to quaternary structure, forms a heterotetramer with UvrA during the search for lesions. Interacts with UvrC in an incision complex.

The protein resides in the cytoplasm. Functionally, the UvrABC repair system catalyzes the recognition and processing of DNA lesions. A damage recognition complex composed of 2 UvrA and 2 UvrB subunits scans DNA for abnormalities. Upon binding of the UvrA(2)B(2) complex to a putative damaged site, the DNA wraps around one UvrB monomer. DNA wrap is dependent on ATP binding by UvrB and probably causes local melting of the DNA helix, facilitating insertion of UvrB beta-hairpin between the DNA strands. Then UvrB probes one DNA strand for the presence of a lesion. If a lesion is found the UvrA subunits dissociate and the UvrB-DNA preincision complex is formed. This complex is subsequently bound by UvrC and the second UvrB is released. If no lesion is found, the DNA wraps around the other UvrB subunit that will check the other stand for damage. This chain is UvrABC system protein B, found in Aster yellows witches'-broom phytoplasma (strain AYWB).